We begin with the raw amino-acid sequence, 500 residues long: 2-isopropylmalate synthase (500 aa).

Positions 5 to 266 (LFIFDTTLRD…ITNITTNKIY (262 aa)) constitute a Pyruvate carboxyltransferase domain. 4 residues coordinate Mn(2+): Asp-14, His-202, His-204, and Asn-238. The regulatory domain stretch occupies residues 389–500 (KLEYLQVTSG…VDAINKFIVD (112 aa)).

This sequence belongs to the alpha-IPM synthase/homocitrate synthase family. LeuA type 1 subfamily. In terms of assembly, homodimer. It depends on Mn(2+) as a cofactor.

The protein localises to the cytoplasm. It catalyses the reaction 3-methyl-2-oxobutanoate + acetyl-CoA + H2O = (2S)-2-isopropylmalate + CoA + H(+). The protein operates within amino-acid biosynthesis; L-leucine biosynthesis; L-leucine from 3-methyl-2-oxobutanoate: step 1/4. In terms of biological role, catalyzes the condensation of the acetyl group of acetyl-CoA with 3-methyl-2-oxobutanoate (2-ketoisovalerate) to form 3-carboxy-3-hydroxy-4-methylpentanoate (2-isopropylmalate). The sequence is that of 2-isopropylmalate synthase from Parabacteroides distasonis (strain ATCC 8503 / DSM 20701 / CIP 104284 / JCM 5825 / NCTC 11152).